The sequence spans 1561 residues: Rho GTPase-activating protein 190 (1561 aa).

FF domains are found at residues 252 to 320 (YQES…HMKK), 365 to 419 (YLQN…YLNS), 426 to 480 (KIGW…HQDD), and 482 to 547 (IEKS…HLRF). One can recognise a pG1 pseudoGTPase domain in the interval 592–765 (SGSDRTLNLL…EPYPSNHTDL (174 aa)). The region spanning 766–926 (RILCCIFCGD…LKTAWDNKYE (161 aa)) is the pG2 pseudoGTPase domain. Phosphoserine occurs at positions 973, 975, 985, 988, and 996. Residues 1054-1074 (KIRPKGPSQTLKVGEAPSRNC) are disordered. Residues 1349–1552 (AQFGKLMITS…TMIDQFPYLF (204 aa)) enclose the Rho-GAP domain.

With respect to regulation, negatively regulated by integrin, bsk and Src/Src64B. Its function is as follows. GTPase-activating protein (GAP) for RhoA/Rho1 that plays an essential role in the stability of dorsal branches of mushroom body (MB) neurons. The MB neurons are the center for olfactory learning and memory. Acts by converting RhoA/Rho1 to an inactive GDP-bound state, leading to repress the RhoA/Rho1-Drok-MRLC signaling pathway thereby maintaining axon branch stability. This Drosophila melanogaster (Fruit fly) protein is Rho GTPase-activating protein 190 (RhoGAPp190).